The chain runs to 220 residues: Octanoyltransferase (220 aa).

The BPL/LPL catalytic domain occupies 34 to 209; that stretch reads ENSQDEIWVV…TLSQELGLAN (176 aa). Substrate contacts are provided by residues 73–80, 140–142, and 153–155; these read RGGQVTYH, SLG, and GLA. Residue cysteine 171 is the Acyl-thioester intermediate of the active site.

It belongs to the LipB family.

The protein localises to the cytoplasm. It carries out the reaction octanoyl-[ACP] + L-lysyl-[protein] = N(6)-octanoyl-L-lysyl-[protein] + holo-[ACP] + H(+). The protein operates within protein modification; protein lipoylation via endogenous pathway; protein N(6)-(lipoyl)lysine from octanoyl-[acyl-carrier-protein]: step 1/2. In terms of biological role, catalyzes the transfer of endogenously produced octanoic acid from octanoyl-acyl-carrier-protein onto the lipoyl domains of lipoate-dependent enzymes. Lipoyl-ACP can also act as a substrate although octanoyl-ACP is likely to be the physiological substrate. The sequence is that of Octanoyltransferase from Shewanella piezotolerans (strain WP3 / JCM 13877).